Here is a 290-residue protein sequence, read N- to C-terminus: Poly-beta-1,6-N-acetyl-D-glucosamine N-deacetylase (290 aa).

The N-terminal stretch at 1–28 is a signal peptide; that stretch reads MKYRKFIILVLSILIILPVSTLDGHHIA. In terms of domain architecture, NodB homology spans 114-290; it reads RSVWINFDDM…KRWDGFHEKD (177 aa).

It belongs to the polysaccharide deacetylase family.

Its subcellular location is the secreted. It is found in the cell wall. Functionally, catalyzes the N-deacetylation of poly-beta-1,6-N-acetyl-D-glucosamine (PNAG, also referred to as PIA), a biofilm adhesin polysaccharide. N-deacetylation is crucial for attachment of the polysaccharide to the bacterial cell surface; it leads to the introduction of positive charges in the otherwise neutral PIA polymer, allowing electrostatic interactions. In Staphylococcus aureus (strain NCTC 8325 / PS 47), this protein is Poly-beta-1,6-N-acetyl-D-glucosamine N-deacetylase (icaB).